The chain runs to 332 residues: Endonuclease 8-like 2 (332 aa).

The Schiff-base intermediate with DNA role is filled by Pro2. The active-site Proton donor is Glu3. Lys50 (proton donor; for beta-elimination activity) is an active-site residue. The residue at position 50 (Lys50) is an N6-acetyllysine. Positions 56–121 are disordered; the sequence is FDPDEEMGPP…EDDSEYLERD (66 aa). Position 68 is a phosphoserine (Ser68). Over residues 74 to 84 the composition is skewed to basic and acidic residues; the sequence is PQKEAQKEGAA. Residues 94–105 are compositionally biased toward polar residues; sequence GQKTPDGSSQSA. Lys154 is modified (N6-acetyllysine). DNA is bound at residue Asn231. The FPG-type zinc finger occupies 284 to 320; the sequence is QVYQREQCPAGHQVMKEAFGPQDGLQRLTWWCPQCQP. Arg310 serves as the catalytic Proton donor; for delta-elimination activity.

Belongs to the FPG family. In terms of assembly, binds EP300.

The protein localises to the nucleus. It catalyses the reaction 2'-deoxyribonucleotide-(2'-deoxyribose 5'-phosphate)-2'-deoxyribonucleotide-DNA = a 3'-end 2'-deoxyribonucleotide-(2,3-dehydro-2,3-deoxyribose 5'-phosphate)-DNA + a 5'-end 5'-phospho-2'-deoxyribonucleoside-DNA + H(+). Acetylation of Lys-50 leads to loss of DNA nicking activity. In terms of biological role, involved in base excision repair of DNA damaged by oxidation or by mutagenic agents. Has DNA glycosylase activity towards 5-hydroxyuracil and other oxidized derivatives of cytosine with a preference for mismatched double-stranded DNA (DNA bubbles). Has low or no DNA glycosylase activity towards thymine glycol, 2-hydroxyadenine, hypoxanthine and 8-oxoguanine. Has AP (apurinic/apyrimidinic) lyase activity and introduces nicks in the DNA strand. Cleaves the DNA backbone by beta-delta elimination to generate a single-strand break at the site of the removed base with both 3'- and 5'-phosphates. The chain is Endonuclease 8-like 2 (NEIL2) from Pongo abelii (Sumatran orangutan).